The sequence spans 156 residues: Cytochrome c-type biogenesis protein CcmE 1 (156 aa).

Topologically, residues 1 to 8 (MNATRKQR) are cytoplasmic. A helical; Signal-anchor for type II membrane protein transmembrane segment spans residues 9 to 29 (LWLVIGVLTAAALAVTLIALA). At 30 to 156 (LQRNMSYLFT…AAAAPLSGVR (127 aa)) the chain is on the periplasmic side. His123 and Tyr127 together coordinate heme.

It belongs to the CcmE/CycJ family.

It localises to the cell inner membrane. Functionally, heme chaperone required for the biogenesis of c-type cytochromes. Transiently binds heme delivered by CcmC and transfers the heme to apo-cytochromes in a process facilitated by CcmF and CcmH. This is Cytochrome c-type biogenesis protein CcmE 1 from Xanthomonas campestris pv. campestris (strain 8004).